Reading from the N-terminus, the 213-residue chain is Orotate phosphoribosyltransferase (213 aa).

Lysine 26 contacts 5-phospho-alpha-D-ribose 1-diphosphate. Position 34–35 (34–35 (FF)) interacts with orotate. 5-phospho-alpha-D-ribose 1-diphosphate is bound by residues 72–73 (YK), arginine 99, lysine 100, lysine 103, histidine 105, and 124–132 (DDVITAGTA). Residues threonine 128 and arginine 156 each contribute to the orotate site.

The protein belongs to the purine/pyrimidine phosphoribosyltransferase family. PyrE subfamily. As to quaternary structure, homodimer. Mg(2+) serves as cofactor.

It catalyses the reaction orotidine 5'-phosphate + diphosphate = orotate + 5-phospho-alpha-D-ribose 1-diphosphate. The protein operates within pyrimidine metabolism; UMP biosynthesis via de novo pathway; UMP from orotate: step 1/2. Functionally, catalyzes the transfer of a ribosyl phosphate group from 5-phosphoribose 1-diphosphate to orotate, leading to the formation of orotidine monophosphate (OMP). The chain is Orotate phosphoribosyltransferase from Shigella dysenteriae serotype 1 (strain Sd197).